Here is a 115-residue protein sequence, read N- to C-terminus: MEKMLLKSTTRHVRIFTAEVVDNELQFHPNKLTLDLDPDNEFIWNEDSLNEINKKFNELIKERAGKDLDDYELRKIGSEIEGLIKILLQNGQLSYNPDCRVMNYSMGLPKTNEVL.

Belongs to the complex I NdhM subunit family. As to quaternary structure, NDH-1 can be composed of about 15 different subunits; different subcomplexes with different compositions have been identified which probably have different functions.

It localises to the cellular thylakoid membrane. The enzyme catalyses a plastoquinone + NADH + (n+1) H(+)(in) = a plastoquinol + NAD(+) + n H(+)(out). It catalyses the reaction a plastoquinone + NADPH + (n+1) H(+)(in) = a plastoquinol + NADP(+) + n H(+)(out). Its function is as follows. NDH-1 shuttles electrons from an unknown electron donor, via FMN and iron-sulfur (Fe-S) centers, to quinones in the respiratory and/or the photosynthetic chain. The immediate electron acceptor for the enzyme in this species is believed to be plastoquinone. Couples the redox reaction to proton translocation, and thus conserves the redox energy in a proton gradient. Cyanobacterial NDH-1 also plays a role in inorganic carbon-concentration. In Prochlorococcus marinus (strain MIT 9312), this protein is NAD(P)H-quinone oxidoreductase subunit M.